Consider the following 90-residue polypeptide: Molybdopterin synthase sulfur carrier subunit (90 aa).

G90 is modified (1-thioglycine; alternate). G90 bears the Glycyl adenylate; alternate mark.

Belongs to the MoaD family. MOCS2A subfamily. In terms of assembly, heterotetramer; composed of 2 small (Mocs2A) and 2 large (Mocs2B) subunits. C-terminal thiocarboxylation occurs in 2 steps, it is first acyl-adenylated (-COAMP) via the hesA/moeB/thiF part of MOCS3, then thiocarboxylated (-COSH) via the rhodanese domain of MOCS3.

It is found in the cytoplasm. It functions in the pathway cofactor biosynthesis; molybdopterin biosynthesis. Functionally, acts as a sulfur carrier required for molybdopterin biosynthesis. Component of the molybdopterin synthase complex that catalyzes the conversion of precursor Z into molybdopterin by mediating the incorporation of 2 sulfur atoms into precursor Z to generate a dithiolene group. In the complex, serves as sulfur donor by being thiocarboxylated (-COSH) at its C-terminus by MOCS3. After interaction with Mocs2B, the sulfur is then transferred to precursor Z to form molybdopterin. The chain is Molybdopterin synthase sulfur carrier subunit from Drosophila erecta (Fruit fly).